Reading from the N-terminus, the 293-residue chain is Transcriptional regulator ICP22 homolog (293 aa).

Disordered regions lie at residues 1–49 (MPHG…QRID) and 175–293 (RFLE…SARR). A compositionally biased stretch (low complexity) spans 21–31 (TPSTSPLIPSL). A compositionally biased stretch (acidic residues) spans 190 to 210 (EECDVSGDESPSEEEEEDEAS). Residues 272 to 281 (AAKKRRKRQP) show a composition bias toward basic residues. Residues 282 to 293 (PKGERPTKSARR) are compositionally biased toward basic and acidic residues.

The protein belongs to the herpesviridae ICP22 family.

The protein is Transcriptional regulator ICP22 homolog (IR4) of Equus caballus (Horse).